A 559-amino-acid polypeptide reads, in one-letter code: 2-isopropylmalate synthase (559 aa).

The region spanning 30 to 304 (PLWAAVDLRD…DPGIDFSRMK (275 aa)) is the Pyruvate carboxyltransferase domain. Mg(2+) contacts are provided by aspartate 39, histidine 243, histidine 245, and asparagine 279. The tract at residues 436-559 (VPMGWVLRSY…ETSEQLIANS (124 aa)) is regulatory domain.

Belongs to the alpha-IPM synthase/homocitrate synthase family. LeuA type 2 subfamily. In terms of assembly, homodimer. The cofactor is Mg(2+).

The protein resides in the cytoplasm. It catalyses the reaction 3-methyl-2-oxobutanoate + acetyl-CoA + H2O = (2S)-2-isopropylmalate + CoA + H(+). The protein operates within amino-acid biosynthesis; L-leucine biosynthesis; L-leucine from 3-methyl-2-oxobutanoate: step 1/4. In terms of biological role, catalyzes the condensation of the acetyl group of acetyl-CoA with 3-methyl-2-oxobutanoate (2-ketoisovalerate) to form 3-carboxy-3-hydroxy-4-methylpentanoate (2-isopropylmalate). This chain is 2-isopropylmalate synthase, found in Alcanivorax borkumensis (strain ATCC 700651 / DSM 11573 / NCIMB 13689 / SK2).